Reading from the N-terminus, the 194-residue chain is Mersacidin decarboxylase (194 aa).

His-75 is a catalytic residue.

Belongs to the HFCD (homooligomeric flavin containing Cys decarboxylase) superfamily. Homododecamer. Requires FAD as cofactor.

It participates in antibiotic biosynthesis; mersacidin biosynthesis. Its function is as follows. Catalyzes the oxidative decarboxylation of the C-terminal cysteine residue of mersacidin to an aminoenethiol residue. This Bacillus sp. (strain HIL-Y85/54728) protein is Mersacidin decarboxylase (mrsD).